A 629-amino-acid chain; its full sequence is tRNA uridine 5-carboxymethylaminomethyl modification enzyme MnmG (629 aa).

FAD-binding positions include 18–23 (GGGHAG), Val-130, and Ser-188. 280–294 (GPRYCPSIEDKVVRF) lines the NAD(+) pocket. An FAD-binding site is contributed by Gln-377.

Belongs to the MnmG family. Homodimer. Heterotetramer of two MnmE and two MnmG subunits. It depends on FAD as a cofactor.

It is found in the cytoplasm. NAD-binding protein involved in the addition of a carboxymethylaminomethyl (cmnm) group at the wobble position (U34) of certain tRNAs, forming tRNA-cmnm(5)s(2)U34. In Granulibacter bethesdensis (strain ATCC BAA-1260 / CGDNIH1), this protein is tRNA uridine 5-carboxymethylaminomethyl modification enzyme MnmG.